A 70-amino-acid chain; its full sequence is Large ribosomal subunit protein eL38 (70 aa).

Belongs to the eukaryotic ribosomal protein eL38 family.

This Julodis onopordi (Jewel beetle) protein is Large ribosomal subunit protein eL38 (RpL38).